The sequence spans 123 residues: Large ribosomal subunit protein uL18 (123 aa).

Belongs to the universal ribosomal protein uL18 family. As to quaternary structure, part of the 50S ribosomal subunit; part of the 5S rRNA/L5/L18/L25 subcomplex. Contacts the 5S and 23S rRNAs.

Its function is as follows. This is one of the proteins that bind and probably mediate the attachment of the 5S RNA into the large ribosomal subunit, where it forms part of the central protuberance. This Chlamydia trachomatis serovar A (strain ATCC VR-571B / DSM 19440 / HAR-13) protein is Large ribosomal subunit protein uL18.